The primary structure comprises 1204 residues: Probable cation-transporting ATPase 13A4 (1204 aa).

At 1–32 (MGENPAKSHYAQLNLGEENEMEIFGYKTQCCR) the chain is on the cytoplasmic side. Residues 33–53 (KALCIAGYILSCGALLLLFYW) form a helical membrane-spanning segment. Residues 54-219 (KPEWDVWANC…FSVCLWFAED (166 aa)) lie on the Extracellular side of the membrane. Residues 220 to 242 (YMEYAAAIIIMSPLSISLTVYDL) form a helical membrane-spanning segment. Over 243–397 (RQQSVKLQRL…NFRLYRDALR (155 aa)) the chain is Cytoplasmic. Residues 398–418 (FLMCLIAFAAIGMIYTVCVFA) form a helical membrane-spanning segment. At 419–433 (LNGEEAGEVVKKALD) the chain is on the extracellular side. Residues 434 to 454 (VITIAVPPALPAALTTGIIYT) form a helical membrane-spanning segment. Topologically, residues 455–897 (QRRLKKKGIF…REGRAALVTS (443 aa)) are cytoplasmic. Residue Asp-483 is the 4-aspartylphosphate intermediate of the active site. Residues Asp-845 and Asp-849 each coordinate Mg(2+). The helical transmembrane segment at 898–918 (FCMFKYMALYSTIQYLGVLLL) threads the bilayer. Residues 919–929 (YWQLNSFGNYQ) lie on the Extracellular side of the membrane. Residues 930-950 (FLFQDLAITTVIGMTMSFTEA) form a helical membrane-spanning segment. Topologically, residues 951–967 (YPKLVPYRPPSQLVSPP) are cytoplasmic. The chain crosses the membrane as a helical span at residues 968-988 (LLLSVILNILFSLGMQILGFL). Residues 989–1043 (MVQKQPWYSKTDIHSACLSVNNHVENSSSASSLGLHGVGGGDPTEVDNGYKSYEN) are Extracellular-facing. Residues 1044–1064 (TTVWLLSTINCLIIALVFSKG) form a helical membrane-spanning segment. The Cytoplasmic portion of the chain corresponds to 1065–1075 (KPFRQPIYTNY). Residues 1076 to 1096 (VFIMVLVGQLGVCLFLVFADI) form a helical membrane-spanning segment. Residues 1097 to 1113 (DDLYSKMDLVCTPTTWR) are Extracellular-facing. The chain crosses the membrane as a helical span at residues 1114–1134 (ISMVMMLAVTLAVSFLVEEAI). The Cytoplasmic portion of the chain corresponds to 1135–1204 (IENRALWLWL…PTFDSNEDAL (70 aa)).

Belongs to the cation transport ATPase (P-type) (TC 3.A.3) family. Type V subfamily.

It localises to the membrane. It carries out the reaction ATP + H2O = ADP + phosphate + H(+). This chain is Probable cation-transporting ATPase 13A4 (ATP13A4), found in Gallus gallus (Chicken).